The primary structure comprises 301 residues: GTPase Era (301 aa).

The Era-type G domain occupies 7–175 (YCGFIAIVGR…AAIVRKHLPE (169 aa)). Positions 15–22 (GRPNVGKS) are G1. 15-22 (GRPNVGKS) lines the GTP pocket. Positions 41 to 45 (QTTRH) are G2. Residues 62-65 (DTPG) are G3. GTP contacts are provided by residues 62–66 (DTPGL) and 124–127 (NKVD). The tract at residues 124-127 (NKVD) is G4. Residues 154-156 (ISA) are G5. One can recognise a KH type-2 domain in the interval 206 to 283 (LGAELPYSVT…HLELWVKVKS (78 aa)).

This sequence belongs to the TRAFAC class TrmE-Era-EngA-EngB-Septin-like GTPase superfamily. Era GTPase family. As to quaternary structure, monomer.

It localises to the cytoplasm. The protein resides in the cell inner membrane. Functionally, an essential GTPase that binds both GDP and GTP, with rapid nucleotide exchange. Plays a role in 16S rRNA processing and 30S ribosomal subunit biogenesis and possibly also in cell cycle regulation and energy metabolism. The chain is GTPase Era from Shigella flexneri serotype 5b (strain 8401).